A 104-amino-acid polypeptide reads, in one-letter code: DNA-binding transcriptional repressor TubR (104 aa).

2 DNA-binding regions (HTH) span residues 43-50 (KTAVAEMI) and 54-65 (KPTVFATVNSFY).

In terms of assembly, homodimer. Binds to tubC DNA, the TubR-DNA complex binds to TubZ.

In terms of biological role, a DNA-binding protein that is part of the type III plasmid partition system used to ensure correct segregation of the pBtoxis plasmid. Cooperatively binds to the centromere-like site (tubC), which may seed filament formation by the TubZ polymerizing GTPase, stabilizing TubZ filaments. TubR-tubC complexes track the depolymerizing minus end of the filament, probably pulling plasmid within the cell. Required for plasmid replication. Negatively regulates levels of TubZ; its effect on RNA expression has not been shown. Specifically binds iterons, 12-bp imperfect direct repeats that function as a plasmid origin of replication. Four TubR dimers bind to tubC, forming an extended bent DNA-protein filament with protein wrapping helically around the outside of the DNA. The protein is DNA-binding transcriptional repressor TubR of Bacillus thuringiensis subsp. israelensis.